The chain runs to 232 residues: Small ribosomal subunit protein uS2 (232 aa).

The protein belongs to the universal ribosomal protein uS2 family.

The chain is Small ribosomal subunit protein uS2 from Heliobacterium modesticaldum (strain ATCC 51547 / Ice1).